Consider the following 275-residue polypeptide: Large ribosomal subunit protein uL2 (275 aa).

Over residues 38-53 the composition is skewed to polar residues; the sequence is SSKAGRNNNGRITTRH. Disordered regions lie at residues 38–60 and 224–257; these read SSKA…GHKQ and AMNP…KGFR.

The protein belongs to the universal ribosomal protein uL2 family. As to quaternary structure, part of the 50S ribosomal subunit. Forms a bridge to the 30S subunit in the 70S ribosome.

Its function is as follows. One of the primary rRNA binding proteins. Required for association of the 30S and 50S subunits to form the 70S ribosome, for tRNA binding and peptide bond formation. It has been suggested to have peptidyltransferase activity; this is somewhat controversial. Makes several contacts with the 16S rRNA in the 70S ribosome. This chain is Large ribosomal subunit protein uL2, found in Burkholderia pseudomallei (strain 1106a).